Here is a 292-residue protein sequence, read N- to C-terminus: MSASVKESLQLQLLEMEMLFSMFPNQGEVKLEDVNALTNIKRYLEGTREALPPKIEFVITLQIEEPKVKIDLQVTMPHSYPYVALQLFGRSSELDRHQQLLLNKGLTSYIGTFDPGELCVCAAIQWLQDNSASYFLNRKLVYEPSTQAKPVKNTFLRMWIYSHHIYQQDLRKKILDVGKRLDVTGFCMTGKPGIICVEGFKEHCEEFWHTIRYPNWKHISCKHAESVETEGNGEDLRLFHSFEELLLEAHGDYGLRNDYHMNLGQFLEFLKKHKSEHVFQILFGIESKSSDS.

In terms of domain architecture, RWD spans L14 to Y134.

This Homo sapiens (Human) protein is RWD domain-containing protein 2A (RWDD2A).